An 87-amino-acid chain; its full sequence is Small ribosomal subunit protein bS20 (87 aa).

It belongs to the bacterial ribosomal protein bS20 family.

In terms of biological role, binds directly to 16S ribosomal RNA. This chain is Small ribosomal subunit protein bS20, found in Rhizorhabdus wittichii (strain DSM 6014 / CCUG 31198 / JCM 15750 / NBRC 105917 / EY 4224 / RW1) (Sphingomonas wittichii).